A 274-amino-acid chain; its full sequence is Large ribosomal subunit protein uL2 (274 aa).

A disordered region spans residues 223-274 (VAMNPVDHPHGGGEGRTGEGRHAVDPWGNLTKGYRTRNNKRTQSMIVSRRKK). The span at 229-246 (DHPHGGGEGRTGEGRHAV) shows a compositional bias: basic and acidic residues.

This sequence belongs to the universal ribosomal protein uL2 family. As to quaternary structure, part of the 50S ribosomal subunit. Forms a bridge to the 30S subunit in the 70S ribosome.

In terms of biological role, one of the primary rRNA binding proteins. Required for association of the 30S and 50S subunits to form the 70S ribosome, for tRNA binding and peptide bond formation. It has been suggested to have peptidyltransferase activity; this is somewhat controversial. Makes several contacts with the 16S rRNA in the 70S ribosome. The protein is Large ribosomal subunit protein uL2 of Verminephrobacter eiseniae (strain EF01-2).